The chain runs to 130 residues: S-protein homolog 22 (130 aa).

The signal sequence occupies residues methionine 1–glycine 21.

Belongs to the plant self-incompatibility (S1) protein family.

It localises to the secreted. The protein is S-protein homolog 22 of Arabidopsis thaliana (Mouse-ear cress).